The following is a 370-amino-acid chain: Protein TEEBE (370 aa).

An N-terminal signal peptide occupies residues 1 to 21; it reads MSLYHSLSIFLLLSLCHGSYS. N215 carries an N-linked (GlcNAc...) asparagine glycan.

As to expression, expressed in primary and lateral roots, stigmatic papillae and hypocotyls.

The protein localises to the secreted. The protein resides in the cell wall. In terms of biological role, prevents hypocotyl epidermal cells elongation by modulating the pectin status in cell walls. Likely regulates pectin methylesterification degree during cell separation and elongation, including upon root-knot nematode Meloidogyne incognita infection. This Arabidopsis thaliana (Mouse-ear cress) protein is Protein TEEBE.